Reading from the N-terminus, the 893-residue chain is Protein kintoun (893 aa).

5 disordered regions span residues 211 to 243 (KNAT…VLPM), 372 to 395 (LSRE…EEAG), 587 to 719 (EQVH…SIDD), 781 to 821 (QRKK…QQTA), and 834 to 893 (PQNN…DEDM). Over residues 214–232 (TAEEREPHPLEHTYPKKPE) the composition is skewed to basic and acidic residues. Ser377 is subject to Phosphoserine. Residues 594–603 (QQEEEEEEEQ) are compositionally biased toward acidic residues. Positions 609–626 (HQHKKGNKKQRKRNKKQR) are enriched in basic residues. Low complexity predominate over residues 640-651 (QQQQHQKQQQQQ). Polar residues-rich tracts occupy residues 656 to 667 (ENSSPESLNAGS) and 684 to 694 (FSECNDSSSVQ). Over residues 709 to 719 (SISESSSSIDD) the composition is skewed to low complexity. The span at 781-797 (QRKKNQKRRDCKLRAQQ) shows a compositional bias: basic residues. A Phosphoserine modification is found at Ser801. Residues 836 to 848 (NNNNRSYSKNNKN) show a composition bias toward low complexity. Positions 865–877 (NNEEDTKRNEADA) are enriched in basic and acidic residues. The segment covering 884-893 (EMDDDDDEDM) has biased composition (acidic residues).

It belongs to the PIH1 family. Kintoun subfamily. Interacts with Pp1alpha-96A, Pp1-87B, Pp1-13C and flw.

The protein resides in the cytoplasm. In terms of biological role, required for cytoplasmic pre-assembly of axonemal dyneins, thereby playing a central role in motility in cilia and flagella. Involved in pre-assembly of dynein arm complexes in the cytoplasm before intraflagellar transport loads them for the ciliary compartment. This is Protein kintoun from Drosophila grimshawi (Hawaiian fruit fly).